Reading from the N-terminus, the 203-residue chain is Pyrrolidone-carboxylate peptidase (203 aa).

Active-site residues include Glu78, Cys141, and His165.

This sequence belongs to the peptidase C15 family. Homotetramer.

It is found in the cytoplasm. It carries out the reaction Release of an N-terminal pyroglutamyl group from a polypeptide, the second amino acid generally not being Pro.. In terms of biological role, removes 5-oxoproline from various penultimate amino acid residues except L-proline. This is Pyrrolidone-carboxylate peptidase from Thermoanaerobacter pseudethanolicus (strain ATCC 33223 / 39E) (Clostridium thermohydrosulfuricum).